Here is a 470-residue protein sequence, read N- to C-terminus: Pyoverdine export outer membrane protein OpmQ (470 aa).

The first 18 residues, 1-18 (MTLPRHLCLLPLSLSLLA), serve as a signal peptide directing secretion. A lipid anchor (N-palmitoyl cysteine) is attached at C19. The S-diacylglycerol cysteine moiety is linked to residue C19.

The protein belongs to the outer membrane factor (OMF) (TC 1.B.17) family. As to quaternary structure, part of the tripartite efflux system PvdRT-OpmQ, which is composed of an inner membrane component with both ATPase and permease domains, PvdT, a periplasmic membrane fusion protein, PvdR, and an outer membrane component, OpmQ.

It is found in the cell outer membrane. In terms of biological role, part of the tripartite efflux system PvdRT-OpmQ required for the secretion into the extracellular milieu of the siderophore pyoverdine (PVD), which is involved in iron acquisition. The system is responsible for export of newly synthesized PVD after the final steps of biosynthesis have taken place in the periplasm. It is also responsible for recycling of PVD after internalization of ferri-PVD into the periplasm by the outer-membrane receptor FpvA and release of iron from PVD, thus making PVD available for new cycles of iron uptake. Contributes to resistance against ampicillin. The sequence is that of Pyoverdine export outer membrane protein OpmQ from Pseudomonas putida (strain ATCC 47054 / DSM 6125 / CFBP 8728 / NCIMB 11950 / KT2440).